Consider the following 418-residue polypeptide: UDP-N-acetylglucosamine 1-carboxyvinyltransferase (418 aa).

Residue 23 to 24 (KN) coordinates phosphoenolpyruvate. Arg-93 contributes to the UDP-N-acetyl-alpha-D-glucosamine binding site. The Proton donor role is filled by Asp-117. Residues Asp-305 and Val-327 each coordinate UDP-N-acetyl-alpha-D-glucosamine.

Belongs to the EPSP synthase family. MurA subfamily.

The protein localises to the cytoplasm. The catalysed reaction is phosphoenolpyruvate + UDP-N-acetyl-alpha-D-glucosamine = UDP-N-acetyl-3-O-(1-carboxyvinyl)-alpha-D-glucosamine + phosphate. It participates in cell wall biogenesis; peptidoglycan biosynthesis. Cell wall formation. Adds enolpyruvyl to UDP-N-acetylglucosamine. This chain is UDP-N-acetylglucosamine 1-carboxyvinyltransferase, found in Mycobacterium bovis (strain ATCC BAA-935 / AF2122/97).